A 185-amino-acid polypeptide reads, in one-letter code: Translation initiation factor IF-3 (185 aa).

This sequence belongs to the IF-3 family. Monomer.

It localises to the cytoplasm. IF-3 binds to the 30S ribosomal subunit and shifts the equilibrium between 70S ribosomes and their 50S and 30S subunits in favor of the free subunits, thus enhancing the availability of 30S subunits on which protein synthesis initiation begins. The sequence is that of Translation initiation factor IF-3 from Streptococcus pneumoniae serotype 19F (strain G54).